The chain runs to 182 residues: ATP-dependent protease subunit HslV (182 aa).

The active site involves Thr-10. Na(+) contacts are provided by Ala-166, Cys-169, and Ser-172.

The protein belongs to the peptidase T1B family. HslV subfamily. A double ring-shaped homohexamer of HslV is capped on each side by a ring-shaped HslU homohexamer. The assembly of the HslU/HslV complex is dependent on binding of ATP.

Its subcellular location is the cytoplasm. The catalysed reaction is ATP-dependent cleavage of peptide bonds with broad specificity.. Its activity is regulated as follows. Allosterically activated by HslU binding. Protease subunit of a proteasome-like degradation complex believed to be a general protein degrading machinery. The protein is ATP-dependent protease subunit HslV of Rickettsia bellii (strain OSU 85-389).